The primary structure comprises 204 residues: MDDKILEGTTTVGITCKDGVVFASERRASMGNLVAHKVAEKIFKINDHIVTTIAGSVGDAQNLMKIIEAEVSLYQMRNNDKISVKAAASVTANILRSGPMYVQTLLGGMDGDKPSLYSLDPAGGMIEDTYISTGSGSIVAYGVLEDRYHEEITTDEGLEIAVRAIKAASERDTFSGNGYLVAKVTKDGFEMLDKEKVNDIVAKI.

A propeptide spans 1–8 (MDDKILEG) (removed in mature form; by autocatalysis). T9 (nucleophile) is an active-site residue.

This sequence belongs to the peptidase T1B family. The 20S proteasome core is composed of 14 alpha and 14 beta subunits that assemble into four stacked heptameric rings, resulting in a barrel-shaped structure. The two inner rings, each composed of seven catalytic beta subunits, are sandwiched by two outer rings, each composed of seven alpha subunits. The catalytic chamber with the active sites is on the inside of the barrel. Has a gated structure, the ends of the cylinder being occluded by the N-termini of the alpha-subunits. Is capped at one or both ends by the proteasome regulatory ATPase, PAN.

The protein resides in the cytoplasm. The catalysed reaction is Cleavage of peptide bonds with very broad specificity.. With respect to regulation, the formation of the proteasomal ATPase PAN-20S proteasome complex, via the docking of the C-termini of PAN into the intersubunit pockets in the alpha-rings, triggers opening of the gate for substrate entry. Interconversion between the open-gate and close-gate conformations leads to a dynamic regulation of the 20S proteasome proteolysis activity. Functionally, component of the proteasome core, a large protease complex with broad specificity involved in protein degradation. This is Proteasome subunit beta from Methanobrevibacter smithii (strain ATCC 35061 / DSM 861 / OCM 144 / PS).